Consider the following 71-residue polypeptide: Omega-conotoxin SO-3 (71 aa).

Residues methionine 1 to alanine 22 form the signal peptide. The propeptide occupies aspartate 23–arginine 45. 3 disulfides stabilise this stretch: cysteine 46–cysteine 61, cysteine 53–cysteine 65, and cysteine 60–cysteine 70. Cysteine 70 carries the post-translational modification Cysteine amide.

This sequence belongs to the conotoxin O1 superfamily. Expressed by the venom duct.

Its subcellular location is the secreted. Its function is as follows. Omega-conotoxins act at presynaptic membranes, they bind and block voltage-gated calcium channels (Cav). This peptide selectively targets Cav2.2/CACNA1B (IC(50)=160 nM) voltage-gated calcium channels. When tested in mammals, this toxin displays an analgesic potency similar to MVIIA in a range of acute and chronic pain models in rodents, but has less adverse effects (tremor, diminution of spontaneous locomotor activity and bad coordinated locomotion) compared with identical dosages of MVIIA injected intrathecally. The polypeptide is Omega-conotoxin SO-3 (Conus striatus (Striated cone)).